Here is a 323-residue protein sequence, read N- to C-terminus: Dehydrogenase/reductase SDR family member 7B (323 aa).

Topologically, residues 1-4 (MDLT) are cytoplasmic. The chain crosses the membrane as a helical; Signal-anchor for type II membrane protein span at residues 5-25 (SWAIFPLLLASIGVYGLYKLL). Topologically, residues 26 to 272 (QKLRSGAYLQ…AVGERRKELL (247 aa)) are lumenal. 2 residues coordinate NAD(+): Ser-46 and Leu-48. Ser-178 contacts substrate. NAD(+)-binding residues include Tyr-191, Lys-195, and Thr-226. Catalysis depends on Tyr-191, which acts as the Proton acceptor.

Belongs to the short-chain dehydrogenases/reductases (SDR) family.

It is found in the endoplasmic reticulum membrane. In terms of biological role, putative oxidoreductase. In Xenopus laevis (African clawed frog), this protein is Dehydrogenase/reductase SDR family member 7B (dhrs7b).